The primary structure comprises 175 residues: Large ribosomal subunit protein uL10 (175 aa).

It belongs to the universal ribosomal protein uL10 family. Part of the ribosomal stalk of the 50S ribosomal subunit. The N-terminus interacts with L11 and the large rRNA to form the base of the stalk. The C-terminus forms an elongated spine to which L12 dimers bind in a sequential fashion forming a multimeric L10(L12)X complex.

Forms part of the ribosomal stalk, playing a central role in the interaction of the ribosome with GTP-bound translation factors. This is Large ribosomal subunit protein uL10 from Prochlorococcus marinus (strain MIT 9313).